The primary structure comprises 634 residues: 1-deoxy-D-xylulose-5-phosphate synthase (634 aa).

Residues H74 and 115-117 (AHS) each bind thiamine diphosphate. D146 contacts Mg(2+). Residues 147-148 (GA), N176, Y283, and E365 each bind thiamine diphosphate. N176 lines the Mg(2+) pocket.

This sequence belongs to the transketolase family. DXPS subfamily. Homodimer. The cofactor is Mg(2+). Thiamine diphosphate is required as a cofactor.

It catalyses the reaction D-glyceraldehyde 3-phosphate + pyruvate + H(+) = 1-deoxy-D-xylulose 5-phosphate + CO2. It functions in the pathway metabolic intermediate biosynthesis; 1-deoxy-D-xylulose 5-phosphate biosynthesis; 1-deoxy-D-xylulose 5-phosphate from D-glyceraldehyde 3-phosphate and pyruvate: step 1/1. Functionally, catalyzes the acyloin condensation reaction between C atoms 2 and 3 of pyruvate and glyceraldehyde 3-phosphate to yield 1-deoxy-D-xylulose-5-phosphate (DXP). The chain is 1-deoxy-D-xylulose-5-phosphate synthase from Burkholderia cenocepacia (strain ATCC BAA-245 / DSM 16553 / LMG 16656 / NCTC 13227 / J2315 / CF5610) (Burkholderia cepacia (strain J2315)).